A 448-amino-acid polypeptide reads, in one-letter code: Cysteine--tRNA ligase (448 aa).

Zn(2+) is bound at residue cysteine 27. Positions 29 to 39 (PTVYNYIHVGN) match the 'HIGH' region motif. Zn(2+)-binding residues include cysteine 210, histidine 235, and glutamate 239. A 'KMSKS' region motif is present at residues 267–271 (KMSKS). An ATP-binding site is contributed by lysine 270.

Belongs to the class-I aminoacyl-tRNA synthetase family. Monomer. The cofactor is Zn(2+).

It is found in the cytoplasm. The enzyme catalyses tRNA(Cys) + L-cysteine + ATP = L-cysteinyl-tRNA(Cys) + AMP + diphosphate. The sequence is that of Cysteine--tRNA ligase from Lactococcus lactis subsp. cremoris (strain SK11).